The chain runs to 232 residues: Pirin-like protein CC_1473 (232 aa).

This sequence belongs to the pirin family.

The polypeptide is Pirin-like protein CC_1473 (Caulobacter vibrioides (strain ATCC 19089 / CIP 103742 / CB 15) (Caulobacter crescentus)).